The following is a 337-amino-acid chain: Protein BIG GRAIN 1-like (337 aa).

3 disordered regions span residues 1 to 32 (MRDM…PSFS), 120 to 163 (SAAG…RPAS), and 179 to 233 (KRPS…ARPS). The span at 137 to 146 (HEQPDVEKTA) shows a compositional bias: basic and acidic residues. Low complexity-rich tracts occupy residues 150-163 (PGSA…RPAS), 195-209 (PACS…SSYA), and 219-230 (RTPPTTTTTARA).

It belongs to the BIG GRAIN 1 (BG1) plant protein family.

It localises to the cell membrane. Functionally, involved in auxin transport. Regulator of the auxin signaling pathway. This is Protein BIG GRAIN 1-like from Oryza sativa subsp. indica (Rice).